We begin with the raw amino-acid sequence, 31 residues long: Spectrin beta chain, non-erythrocytic 1 (31 aa).

Spectrin repeat units lie at residues Val1–Lys10, Tyr11–Arg19, and Thr20–Lys31. Tyr27 is subject to Phosphotyrosine.

The protein belongs to the spectrin family. As to quaternary structure, interacts with ANK2. Interacts with CPNE4 (via VWFA domain). Like erythrocyte spectrin, the spectrin-like proteins are capable to form dimers which can further associate to tetramers. Associates with the gamma-tubulin complex in brain, but not in kidney, liver, sperm, or uterus. Interacts with CAMSAP1. Can form heterodimers with SPTAN1.

It is found in the cytoplasm. The protein resides in the cytoskeleton. Its subcellular location is the myofibril. The protein localises to the sarcomere. It localises to the m line. It is found in the cytosol. The protein resides in the cell membrane. Fodrin, which seems to be involved in secretion, interacts with calmodulin in a calcium-dependent manner and is thus candidate for the calcium-dependent movement of the cytoskeleton at the membrane. Plays a critical role in central nervous system development and function. In Capra hircus (Goat), this protein is Spectrin beta chain, non-erythrocytic 1 (SPTBN1).